The sequence spans 264 residues: 3-methyl-2-oxobutanoate hydroxymethyltransferase (264 aa).

Mg(2+) is bound by residues D46 and D85. 3-methyl-2-oxobutanoate-binding positions include 46 to 47, D85, and K113; that span reads DS. E115 contacts Mg(2+). E181 acts as the Proton acceptor in catalysis.

This sequence belongs to the PanB family. Homodecamer; pentamer of dimers. Requires Mg(2+) as cofactor.

It is found in the cytoplasm. The catalysed reaction is 3-methyl-2-oxobutanoate + (6R)-5,10-methylene-5,6,7,8-tetrahydrofolate + H2O = 2-dehydropantoate + (6S)-5,6,7,8-tetrahydrofolate. Its pathway is cofactor biosynthesis; (R)-pantothenate biosynthesis; (R)-pantoate from 3-methyl-2-oxobutanoate: step 1/2. Catalyzes the reversible reaction in which hydroxymethyl group from 5,10-methylenetetrahydrofolate is transferred onto alpha-ketoisovalerate to form ketopantoate. The polypeptide is 3-methyl-2-oxobutanoate hydroxymethyltransferase (Salmonella typhi).